Here is a 502-residue protein sequence, read N- to C-terminus: ATP synthase subunit alpha 1/3 (502 aa).

169–176 is an ATP binding site; the sequence is GDRQTGKT.

It belongs to the ATPase alpha/beta chains family. As to quaternary structure, F-type ATPases have 2 components, CF(1) - the catalytic core - and CF(0) - the membrane proton channel. CF(1) has five subunits: alpha(3), beta(3), gamma(1), delta(1), epsilon(1). CF(0) has three main subunits: a(1), b(2) and c(9-12). The alpha and beta chains form an alternating ring which encloses part of the gamma chain. CF(1) is attached to CF(0) by a central stalk formed by the gamma and epsilon chains, while a peripheral stalk is formed by the delta and b chains.

The protein resides in the cell inner membrane. The catalysed reaction is ATP + H2O + 4 H(+)(in) = ADP + phosphate + 5 H(+)(out). Its function is as follows. Produces ATP from ADP in the presence of a proton gradient across the membrane. The alpha chain is a regulatory subunit. In Syntrophotalea carbinolica (strain DSM 2380 / NBRC 103641 / GraBd1) (Pelobacter carbinolicus), this protein is ATP synthase subunit alpha 1/3.